Reading from the N-terminus, the 88-residue chain is YcgL domain-containing protein CGSHiGG_01115 (88 aa).

Positions 1 to 85 (MLCAIYKSKK…QDDGLFNSLS (85 aa)) constitute a YcgL domain.

This is YcgL domain-containing protein CGSHiGG_01115 from Haemophilus influenzae (strain PittGG).